A 270-amino-acid polypeptide reads, in one-letter code: tRNA pseudouridine synthase A (270 aa).

The Nucleophile role is filled by D51. Position 109 (Y109) interacts with substrate.

The protein belongs to the tRNA pseudouridine synthase TruA family. In terms of assembly, homodimer.

The catalysed reaction is uridine(38/39/40) in tRNA = pseudouridine(38/39/40) in tRNA. Its function is as follows. Formation of pseudouridine at positions 38, 39 and 40 in the anticodon stem and loop of transfer RNAs. This Burkholderia ambifaria (strain ATCC BAA-244 / DSM 16087 / CCUG 44356 / LMG 19182 / AMMD) (Burkholderia cepacia (strain AMMD)) protein is tRNA pseudouridine synthase A.